The primary structure comprises 38 residues: Cytochrome b6-f complex subunit 5 (38 aa).

The helical transmembrane segment at Leu-5–Ala-25 threads the bilayer.

The protein belongs to the PetG family. In terms of assembly, the 4 large subunits of the cytochrome b6-f complex are cytochrome b6, subunit IV (17 kDa polypeptide, PetD), cytochrome f and the Rieske protein, while the 4 small subunits are PetG, PetL, PetM and PetN. The complex functions as a dimer.

Its subcellular location is the cellular thylakoid membrane. Functionally, component of the cytochrome b6-f complex, which mediates electron transfer between photosystem II (PSII) and photosystem I (PSI), cyclic electron flow around PSI, and state transitions. PetG is required for either the stability or assembly of the cytochrome b6-f complex. The sequence is that of Cytochrome b6-f complex subunit 5 from Prochlorococcus marinus (strain MIT 9313).